Consider the following 277-residue polypeptide: Orotidine 5'-phosphate decarboxylase (277 aa).

Residues Asp40, 62-64, 93-102, Tyr229, and Arg247 each bind substrate; these read KTH and DRKFIDIGNT. Lys95 functions as the Proton donor in the catalytic mechanism.

This sequence belongs to the OMP decarboxylase family.

It carries out the reaction orotidine 5'-phosphate + H(+) = UMP + CO2. The protein operates within pyrimidine metabolism; UMP biosynthesis via de novo pathway; UMP from orotate: step 2/2. This chain is Orotidine 5'-phosphate decarboxylase (pyrG), found in Aspergillus oryzae (strain ATCC 42149 / RIB 40) (Yellow koji mold).